We begin with the raw amino-acid sequence, 290 residues long: Light-independent protochlorophyllide reductase iron-sulfur ATP-binding protein (290 aa).

Residues 10 to 15 (GIGKST) and Lys-39 contribute to the ATP site. Ser-14 contributes to the Mg(2+) binding site. Positions 95 and 129 each coordinate [4Fe-4S] cluster. Residue 180–181 (NR) coordinates ATP.

It belongs to the NifH/BchL/ChlL family. Homodimer. Protochlorophyllide reductase is composed of three subunits; ChlL, ChlN and ChlB. It depends on [4Fe-4S] cluster as a cofactor.

The protein localises to the plastid. It is found in the chloroplast. It catalyses the reaction chlorophyllide a + oxidized 2[4Fe-4S]-[ferredoxin] + 2 ADP + 2 phosphate = protochlorophyllide a + reduced 2[4Fe-4S]-[ferredoxin] + 2 ATP + 2 H2O. It participates in porphyrin-containing compound metabolism; chlorophyll biosynthesis (light-independent). Its function is as follows. Component of the dark-operative protochlorophyllide reductase (DPOR) that uses Mg-ATP and reduced ferredoxin to reduce ring D of protochlorophyllide (Pchlide) to form chlorophyllide a (Chlide). This reaction is light-independent. The L component serves as a unique electron donor to the NB-component of the complex, and binds Mg-ATP. This chain is Light-independent protochlorophyllide reductase iron-sulfur ATP-binding protein, found in Zygnema circumcarinatum (Green alga).